A 335-amino-acid polypeptide reads, in one-letter code: uncharacterized protein (335 aa).

Solcar repeat units lie at residues 22–129 (VKPI…LLPL), 134–227 (GFPA…IRLF), and 244–327 (KDLY…TKKY). 6 helical membrane passes run 28–48 (MLSA…LDVV), 104–123 (GLVP…FLGY), 133–154 (WGFP…ATIV), 195–219 (GILN…FYWW), 246–263 (LYIN…ATLL), and 307–323 (CVKV…SYHL).

It belongs to the mitochondrial carrier (TC 2.A.29) family.

The protein localises to the mitochondrion inner membrane. This is an uncharacterized protein from Schizosaccharomyces pombe (strain 972 / ATCC 24843) (Fission yeast).